The primary structure comprises 133 residues: Large ribosomal subunit protein bL20 (133 aa).

This sequence belongs to the bacterial ribosomal protein bL20 family.

Functionally, binds directly to 23S ribosomal RNA and is necessary for the in vitro assembly process of the 50S ribosomal subunit. It is not involved in the protein synthesizing functions of that subunit. This Mesorhizobium japonicum (strain LMG 29417 / CECT 9101 / MAFF 303099) (Mesorhizobium loti (strain MAFF 303099)) protein is Large ribosomal subunit protein bL20.